Reading from the N-terminus, the 476-residue chain is Zinc metalloproteinase/disintegrin (476 aa).

The first 20 residues, 1-20 (MIQVLLVTICLAAFPYQGSS), serve as a signal peptide directing secretion. Residues 21–192 (IILESGNVND…ASQSNLTPEQ (172 aa)) constitute a propeptide that is removed on maturation. Position 193 is a pyrrolidone carboxylic acid (Q193). The region spanning 198-393 (RYIELAVVAD…HNPQCILNKP (196 aa)) is the Peptidase M12B domain. Ca(2+)-binding residues include E201 and D285. 3 disulfides stabilise this stretch: C309-C388, C348-C372, and C350-C355. Residue H334 participates in Zn(2+) binding. The active site involves E335. Zn(2+) is bound by residues H338 and H344. The Ca(2+) site is built by C388 and N391. The propeptide occupies 394 to 403 (LTTVSGNELL). Positions 395 to 476 (TTVSGNELLE…ADCPRNRFHA (82 aa)) constitute a Disintegrin domain. Intrachain disulfides connect C409–C424, C411–C419, C418–C441, C432–C438, C437–C462, and C450–C469. Positions 454–456 (RGD) match the Cell attachment site motif.

The protein belongs to the venom metalloproteinase (M12B) family. P-II subfamily. P-IIa sub-subfamily. As to quaternary structure, monomer (metalloprotease). Zn(2+) is required as a cofactor. The N-terminus is blocked. In terms of processing, not glycosylated. As to expression, expressed by the venom gland.

The protein localises to the secreted. Its activity is regulated as follows. Inhibited by EDTA, and 1,10-phenanthroline, but not by PMSF. Functionally, non-hemorrhagic proteinase that activates prothrombin (F2) calcium-independently. Activates factor X (F10) and hydrolyzes the Aalpha-chain and more slowly the Bbeta-chain of fibrin and fibrinogen without affecting the gamma chain. It induces neither detachment nor apoptosis of human endothelial cells and is also not able to trigger an endothelial pro-inflammatory cell response. Nitric oxide and prostacyclin levels released by endothelial cells are significantly increased after treatment with insularinase A. Its function is as follows. Inhibits ADP-induced platelet aggregation (IC(50)=0.8 uM for native protein). Interestingly, inhibits the adhesion of HUVECs to immobilized fibrinogen at very low concentrations (IC(50)=36 nM). The sequence is that of Zinc metalloproteinase/disintegrin from Bothrops insularis (Golden lancehead).